Here is a 172-residue protein sequence, read N- to C-terminus: MNLQDNIRIVEGFPKKGISFKDITTLIRDKDAFKYAVDKIAGYLKDKNIDVVVGPEARGFLFGAPIAYTLGAGFVPVRKQGKLPYDTLSIKYDLEYGSDVLQIHKDAINKGDRVALVDDLLATGGTTSSVVKLIEQAGGEIVTIDFVIELTDLKGREKLKGYDVLSLIKYDI.

This sequence belongs to the purine/pyrimidine phosphoribosyltransferase family. As to quaternary structure, homodimer.

It localises to the cytoplasm. It catalyses the reaction AMP + diphosphate = 5-phospho-alpha-D-ribose 1-diphosphate + adenine. It participates in purine metabolism; AMP biosynthesis via salvage pathway; AMP from adenine: step 1/1. In terms of biological role, catalyzes a salvage reaction resulting in the formation of AMP, that is energically less costly than de novo synthesis. This is Adenine phosphoribosyltransferase from Clostridium kluyveri (strain NBRC 12016).